We begin with the raw amino-acid sequence, 354 residues long: Neuronal growth regulator 1 (354 aa).

Positions 1–37 (MDMMLLVQGACCSNQWLAAVLLSLCCLLPSCLPAGQS) are cleaved as a signal peptide. Ig-like C2-type domains are found at residues 38–134 (VDFP…VHLT), 139–221 (PKIY…KVVV), and 225–313 (PTIQ…LPLN). An intrachain disulfide couples cysteine 60 to cysteine 118. Residues asparagine 73 and asparagine 155 are each glycosylated (N-linked (GlcNAc...) asparagine). Intrachain disulfides connect cysteine 160/cysteine 203 and cysteine 245/cysteine 297. Tyrosine 187 is modified (phosphotyrosine). Asparagine 275, asparagine 286, asparagine 294, and asparagine 307 each carry an N-linked (GlcNAc...) asparagine glycan. The GPI-anchor amidated glycine moiety is linked to residue glycine 324. Residues 325–354 (SADVLFSCWYLVLTLSSFTSIFYLKNAILQ) constitute a propeptide, removed in mature form.

Belongs to the immunoglobulin superfamily. IgLON family.

It localises to the cell membrane. Functionally, may be involved in cell-adhesion. May function as a trans-neural growth-promoting factor in regenerative axon sprouting in the mammalian brain. This is Neuronal growth regulator 1 (NEGR1) from Homo sapiens (Human).